The sequence spans 159 residues: MRVGFGYDVHAFVEGRPLVLGGVKVPHDRGLLGHSDADVLLHAICDALLGGAALGDIGRHFPDTDPRFKGISSLLLLRQTVELVRRAGFRIANIDTTLVLQKPRLAPYIARMAEEIGRATDLPVSSVNVKATTTEKLGFAGREEGVAAYAVVLLRSDGR.

Residues Asp-8 and His-10 each coordinate a divalent metal cation. 4-CDP-2-C-methyl-D-erythritol 2-phosphate-binding positions include 8 to 10 (DVH) and 34 to 35 (HS). His-42 provides a ligand contact to a divalent metal cation. Residues 56 to 58 (DIG), 61 to 65 (FPDTD), 132 to 135 (TTTE), Phe-139, and Arg-142 contribute to the 4-CDP-2-C-methyl-D-erythritol 2-phosphate site.

Belongs to the IspF family. In terms of assembly, homotrimer. A divalent metal cation is required as a cofactor.

The enzyme catalyses 4-CDP-2-C-methyl-D-erythritol 2-phosphate = 2-C-methyl-D-erythritol 2,4-cyclic diphosphate + CMP. It participates in isoprenoid biosynthesis; isopentenyl diphosphate biosynthesis via DXP pathway; isopentenyl diphosphate from 1-deoxy-D-xylulose 5-phosphate: step 4/6. Its function is as follows. Involved in the biosynthesis of isopentenyl diphosphate (IPP) and dimethylallyl diphosphate (DMAPP), two major building blocks of isoprenoid compounds. Catalyzes the conversion of 4-diphosphocytidyl-2-C-methyl-D-erythritol 2-phosphate (CDP-ME2P) to 2-C-methyl-D-erythritol 2,4-cyclodiphosphate (ME-CPP) with a corresponding release of cytidine 5-monophosphate (CMP). The polypeptide is 2-C-methyl-D-erythritol 2,4-cyclodiphosphate synthase (Syntrophobacter fumaroxidans (strain DSM 10017 / MPOB)).